We begin with the raw amino-acid sequence, 182 residues long: ATP synthase subunit delta (182 aa).

Belongs to the ATPase delta chain family. As to quaternary structure, F-type ATPases have 2 components, F(1) - the catalytic core - and F(0) - the membrane proton channel. F(1) has five subunits: alpha(3), beta(3), gamma(1), delta(1), epsilon(1). CF(0) has four main subunits: a(1), b(1), b'(1) and c(10-14). The alpha and beta chains form an alternating ring which encloses part of the gamma chain. F(1) is attached to F(0) by a central stalk formed by the gamma and epsilon chains, while a peripheral stalk is formed by the delta, b and b' chains.

It localises to the cellular thylakoid membrane. Its function is as follows. F(1)F(0) ATP synthase produces ATP from ADP in the presence of a proton or sodium gradient. F-type ATPases consist of two structural domains, F(1) containing the extramembraneous catalytic core and F(0) containing the membrane proton channel, linked together by a central stalk and a peripheral stalk. During catalysis, ATP synthesis in the catalytic domain of F(1) is coupled via a rotary mechanism of the central stalk subunits to proton translocation. Functionally, this protein is part of the stalk that links CF(0) to CF(1). It either transmits conformational changes from CF(0) to CF(1) or is implicated in proton conduction. The polypeptide is ATP synthase subunit delta (Synechococcus sp. (strain WH7803)).